Consider the following 706-residue polypeptide: SPX domain-containing membrane protein OsI_32082 (706 aa).

The SPX domain maps to V2 to R145. Transmembrane regions (helical) follow at residues M251 to V271, L281 to F301, L318 to L338, S340 to V359, A378 to L398, and L414 to F434. The tract at residues S475–T498 is disordered. Over residues E476 to H488 the composition is skewed to acidic residues. The next 5 membrane-spanning stretches (helical) occupy residues L520 to V540, V554 to I574, I583 to V603, V611 to L631, and L678 to L698.

This sequence belongs to the major facilitator superfamily.

Its subcellular location is the membrane. This Oryza sativa subsp. indica (Rice) protein is SPX domain-containing membrane protein OsI_32082.